Reading from the N-terminus, the 274-residue chain is Cytochrome b-c1 complex subunit Rieske, mitochondrial (274 aa).

Over 79 to 103 (SHTDVKVPDFYDYRRLEVLDSTKSS) the chain is Mitochondrial matrix. A helical membrane pass occupies residues 104 to 140 (RESSEARKGFSYLVTAVTTVGVAYAAKNVVTQFISSM). Residues 141–274 (SASADVLAMA…FTGDDVVVVG (134 aa)) lie on the Mitochondrial intermembrane side of the membrane. Positions 187 to 272 (EAAVELSQLR…YEFTGDDVVV (86 aa)) constitute a Rieske domain. Positions 217, 219, 236, 239, and 241 each coordinate [2Fe-2S] cluster. An intrachain disulfide couples cysteine 222 to cysteine 238.

Belongs to the Rieske iron-sulfur protein family. In terms of assembly, component of the ubiquinol-cytochrome c oxidoreductase (cytochrome b-c1 complex, complex III, CIII), a multisubunit enzyme composed of 11 subunits. The complex is composed of 3 respiratory subunits cytochrome b, cytochrome c1 and Rieske protein UQCRFS1, 2 core protein subunits UQCRC1/QCR1 and UQCRC2/QCR2, and 6 low-molecular weight protein subunits UQCRH/QCR6, UQCRB/QCR7, UQCRQ/QCR8, UQCR10/QCR9, UQCR11/QCR10 and subunit 9, the cleavage product of Rieske protein UQCRFS1. The complex exists as an obligatory dimer and forms supercomplexes (SCs) in the inner mitochondrial membrane with NADH-ubiquinone oxidoreductase (complex I, CI) and cytochrome c oxidase (complex IV, CIV), resulting in different assemblies (supercomplex SCI(1)III(2)IV(1) and megacomplex MCI(2)III(2)IV(2)). Incorporation of the Rieske protein UQCRFS1 is the penultimate step in complex III assembly. Interacts with TTC19, which is involved in the clearance of UQCRFS1 fragments. Component of the ubiquinol-cytochrome c oxidoreductase (cytochrome b-c1 complex, complex III, CIII). Subunit 9 corresponds to the mitochondrial targeting sequence (MTS) of Rieske protein UQCRFS1. It is retained after processing and incorporated inside complex III, where it remains bound to the complex and localizes between the 2 core subunits UQCRC1/QCR1 and UQCRC2/QCR2. [2Fe-2S] cluster is required as a cofactor. In terms of processing, proteolytic processing is necessary for the correct insertion of UQCRFS1 in the complex III dimer. Several fragments are generated during UQCRFS1 insertion, most probably due to the endogenous matrix-processing peptidase (MPP) activity of the 2 core protein subunits UQCRC1/QCR1 and UQCRC2/QCR2, which are homologous to the 2 mitochondrial-processing peptidase (MPP) subunits beta-MPP and alpha-MPP respectively. The action of the protease is also necessary for the clearance of the UQCRFS1 fragments.

It is found in the mitochondrion inner membrane. The catalysed reaction is a quinol + 2 Fe(III)-[cytochrome c](out) = a quinone + 2 Fe(II)-[cytochrome c](out) + 2 H(+)(out). Component of the ubiquinol-cytochrome c oxidoreductase, a multisubunit transmembrane complex that is part of the mitochondrial electron transport chain which drives oxidative phosphorylation. The respiratory chain contains 3 multisubunit complexes succinate dehydrogenase (complex II, CII), ubiquinol-cytochrome c oxidoreductase (cytochrome b-c1 complex, complex III, CIII) and cytochrome c oxidase (complex IV, CIV), that cooperate to transfer electrons derived from NADH and succinate to molecular oxygen, creating an electrochemical gradient over the inner membrane that drives transmembrane transport and the ATP synthase. The cytochrome b-c1 complex catalyzes electron transfer from ubiquinol to cytochrome c, linking this redox reaction to translocation of protons across the mitochondrial inner membrane, with protons being carried across the membrane as hydrogens on the quinol. In the process called Q cycle, 2 protons are consumed from the matrix, 4 protons are released into the intermembrane space and 2 electrons are passed to cytochrome c. The Rieske protein is a catalytic core subunit containing a [2Fe-2S] iron-sulfur cluster. It cycles between 2 conformational states during catalysis to transfer electrons from the quinol bound in the Q(0) site in cytochrome b to cytochrome c1. Incorporation of UQCRFS1 is the penultimate step in complex III assembly. In terms of biological role, component of the ubiquinol-cytochrome c oxidoreductase (cytochrome b-c1 complex, complex III, CIII). UQCRFS1 undergoes proteolytic processing once it is incorporated in the complex III dimer. One of the fragments, called subunit 9, corresponds to its mitochondrial targeting sequence (MTS). The proteolytic processing is necessary for the correct insertion of UQCRFS1 in the complex III dimer, but the persistence of UQCRFS1-derived fragments may prevent newly imported UQCRFS1 to be processed and assembled into complex III and is detrimental for the complex III structure and function. This is Cytochrome b-c1 complex subunit Rieske, mitochondrial (UQCRFS1) from Chlorocebus aethiops (Green monkey).